A 370-amino-acid polypeptide reads, in one-letter code: tRNA-specific 2-thiouridylase MnmA (370 aa).

Residues 11–18 (GMSGGVDS) and M37 each bind ATP. Positions 97 to 99 (NPD) are interaction with target base in tRNA. C102 acts as the Nucleophile in catalysis. A disulfide bridge links C102 with C199. G126 lines the ATP pocket. Residues 149–151 (KDQ) are interaction with tRNA. The active-site Cysteine persulfide intermediate is C199. An interaction with tRNA region spans residues 307-308 (RY).

Belongs to the MnmA/TRMU family.

The protein resides in the cytoplasm. It carries out the reaction S-sulfanyl-L-cysteinyl-[protein] + uridine(34) in tRNA + AH2 + ATP = 2-thiouridine(34) in tRNA + L-cysteinyl-[protein] + A + AMP + diphosphate + H(+). Functionally, catalyzes the 2-thiolation of uridine at the wobble position (U34) of tRNA, leading to the formation of s(2)U34. The polypeptide is tRNA-specific 2-thiouridylase MnmA (Staphylococcus carnosus (strain TM300)).